Here is a 216-residue protein sequence, read N- to C-terminus: N-glycosylase/DNA lyase (216 aa).

8-oxoguanine is bound by residues Gln27, Ser48, and Trp59. The segment at 106-170 (EHYYENMVAL…LDYRLKKINP (65 aa)) is helix-hairpin-helix. Lys130 serves as the catalytic Schiff-base intermediate with DNA. 8-oxoguanine-binding residues include Phe134 and Pro160. Asp162 is a catalytic residue. Positions 190 and 194 each coordinate 8-oxoguanine.

This sequence belongs to the archaeal N-glycosylase/DNA lyase (AGOG) family.

The catalysed reaction is 2'-deoxyribonucleotide-(2'-deoxyribose 5'-phosphate)-2'-deoxyribonucleotide-DNA = a 3'-end 2'-deoxyribonucleotide-(2,3-dehydro-2,3-deoxyribose 5'-phosphate)-DNA + a 5'-end 5'-phospho-2'-deoxyribonucleoside-DNA + H(+). In terms of biological role, DNA repair enzyme that is part of the base excision repair (BER) pathway; protects from oxidative damage by removing the major product of DNA oxidation, 8-oxoguanine (GO), from single- and double-stranded DNA substrates. This is N-glycosylase/DNA lyase from Nanoarchaeum equitans (strain Kin4-M).